The sequence spans 423 residues: Probable peptidoglycan glycosyltransferase FtsW (423 aa).

At 1–53 the chain is on the cytoplasmic side; the sequence is MNLKEKLFPENRLGLNRFWNFSRGGIDNFRTGLRDAVSGVEQTRSRMMEYDQL. A helical transmembrane segment spans residues 54–74; sequence LVWAILSLMLIGLVMVYSASI. Residues 75–88 are Periplasmic-facing; sequence TLADGPKYANYSSN. Residues 89-109 traverse the membrane as a helical segment; that stretch reads FFLIRHMISLAIAIGVGIWAF. Residues 110 to 119 lie on the Cytoplasmic side of the membrane; that stretch reads KIPTKVWDRY. The helical transmembrane segment at 120–140 threads the bilayer; the sequence is SPVIFGITVLLLIAVLIPGVG. Over 141–149 the chain is Periplasmic; sequence RGVNGAKRW. The helical transmembrane segment at 150–170 threads the bilayer; the sequence is IPLGLMNFQSSELMKFAAVIF. Residues 171–184 lie on the Cytoplasmic side of the membrane; the sequence is AASYTVQRQEYLHS. A helical membrane pass occupies residues 185 to 205; sequence FVKGMLPMGIAVALVGGLLMA. The Periplasmic portion of the chain corresponds to 206-208; the sequence is EPD. A helical transmembrane segment spans residues 209–229; it reads MGAFVVVALIAFGILFLGGIN. The Cytoplasmic segment spans residues 230–231; sequence AK. Residues 232-252 form a helical membrane-spanning segment; sequence LFGGLIAVGLMSGATMIAFSP. At 253–310 the chain is on the periplasmic side; the sequence is LRRGRMLAFMDPWQVDNAANKGYQLTHSLMAFGRGEWFGTGLGGSVEKLHYLPEAHTD. Residues 311 to 331 traverse the membrane as a helical segment; the sequence is FIMAVIGEELGFVGVVVMIFL. The Cytoplasmic portion of the chain corresponds to 332-359; the sequence is FYWIVRRAFLIGRTALQLDRSFAGLAAK. Residues 360–380 form a helical membrane-spanning segment; the sequence is GVAIWIGWQAFINMGVNLGLL. The Periplasmic portion of the chain corresponds to 381 to 386; it reads PTKGLT. A helical membrane pass occupies residues 387-407; the sequence is LPLVSYGGSGILMNAVAMAML. Topologically, residues 408–423 are cytoplasmic; sequence LRIDFENRILMRGGKL.

It belongs to the SEDS family. FtsW subfamily.

Its subcellular location is the cell inner membrane. It catalyses the reaction [GlcNAc-(1-&gt;4)-Mur2Ac(oyl-L-Ala-gamma-D-Glu-L-Lys-D-Ala-D-Ala)](n)-di-trans,octa-cis-undecaprenyl diphosphate + beta-D-GlcNAc-(1-&gt;4)-Mur2Ac(oyl-L-Ala-gamma-D-Glu-L-Lys-D-Ala-D-Ala)-di-trans,octa-cis-undecaprenyl diphosphate = [GlcNAc-(1-&gt;4)-Mur2Ac(oyl-L-Ala-gamma-D-Glu-L-Lys-D-Ala-D-Ala)](n+1)-di-trans,octa-cis-undecaprenyl diphosphate + di-trans,octa-cis-undecaprenyl diphosphate + H(+). The protein operates within cell wall biogenesis; peptidoglycan biosynthesis. Functionally, peptidoglycan polymerase that is essential for cell division. This chain is Probable peptidoglycan glycosyltransferase FtsW, found in Polynucleobacter necessarius subsp. necessarius (strain STIR1).